The sequence spans 85 residues: Large ribosomal subunit protein bL27 (85 aa).

This sequence belongs to the bacterial ribosomal protein bL27 family.

The polypeptide is Large ribosomal subunit protein bL27 (Pseudomonas fluorescens (strain SBW25)).